A 132-amino-acid chain; its full sequence is Large ribosomal subunit protein uL14 (132 aa).

The protein belongs to the universal ribosomal protein uL14 family. In terms of assembly, part of the 50S ribosomal subunit. Forms a cluster with proteins L3 and L24e, part of which may contact the 16S rRNA in 2 intersubunit bridges.

In terms of biological role, binds to 23S rRNA. Forms part of two intersubunit bridges in the 70S ribosome. In Methanocella arvoryzae (strain DSM 22066 / NBRC 105507 / MRE50), this protein is Large ribosomal subunit protein uL14.